Consider the following 374-residue polypeptide: uncharacterized protein (374 aa).

Belongs to the mimivirus R640 family.

The protein localises to the virion. This is an uncharacterized protein from Acanthamoeba polyphaga (Amoeba).